Here is a 352-residue protein sequence, read N- to C-terminus: Biotin synthase (352 aa).

Residues 44–262 (NRVQVSTLLS…LAVARILMPQ (219 aa)) enclose the Radical SAM core domain. [4Fe-4S] cluster is bound by residues C59, C63, and C66. [2Fe-2S] cluster is bound by residues C103, C134, C194, and R266.

The protein belongs to the radical SAM superfamily. Biotin synthase family. Homodimer. It depends on [4Fe-4S] cluster as a cofactor. [2Fe-2S] cluster is required as a cofactor.

The enzyme catalyses (4R,5S)-dethiobiotin + (sulfur carrier)-SH + 2 reduced [2Fe-2S]-[ferredoxin] + 2 S-adenosyl-L-methionine = (sulfur carrier)-H + biotin + 2 5'-deoxyadenosine + 2 L-methionine + 2 oxidized [2Fe-2S]-[ferredoxin]. The protein operates within cofactor biosynthesis; biotin biosynthesis; biotin from 7,8-diaminononanoate: step 2/2. In terms of biological role, catalyzes the conversion of dethiobiotin (DTB) to biotin by the insertion of a sulfur atom into dethiobiotin via a radical-based mechanism. This Pseudomonas savastanoi pv. phaseolicola (strain 1448A / Race 6) (Pseudomonas syringae pv. phaseolicola (strain 1448A / Race 6)) protein is Biotin synthase.